The primary structure comprises 257 residues: MNPLIIKLGGVLLDSEEALERLFTALDSYRQQHQRPLVIVHGGGCLVDELMKKLSLPVVKKNGLRVTPADQIDIITGALAGTANKTLLAWAIKHQINAVGLSLADGGSVTVTPLDPALGHVGNAQPGSPLLLNTLLGAGYLPVISSIGITADGQLMNVNADQAATALAATLGADLILLSDVSGILDGKGQRIAEMTAQKAEQLIAQGIITDGMVVKVNAALDAARTLGRPVDIASWRHADQLPALFNGVSIGTRILA.

Substrate is bound by residues 43 to 44, Arg65, and Asn157; that span reads GG. Residues 180–185 and 208–210 each bind ATP; these read DVSGIL and IIT.

The protein belongs to the acetylglutamate kinase family. ArgB subfamily. As to quaternary structure, homodimer.

Its subcellular location is the cytoplasm. It catalyses the reaction N-acetyl-L-glutamate + ATP = N-acetyl-L-glutamyl 5-phosphate + ADP. It participates in amino-acid biosynthesis; L-arginine biosynthesis; N(2)-acetyl-L-ornithine from L-glutamate: step 2/4. Its function is as follows. Catalyzes the ATP-dependent phosphorylation of N-acetyl-L-glutamate. The polypeptide is Acetylglutamate kinase (Serratia proteamaculans (strain 568)).